The primary structure comprises 304 residues: Glycosyltransferase AglE (304 aa).

Belongs to the glycosyltransferase 2 family.

It localises to the cell membrane. It functions in the pathway cell surface structure biogenesis; S-layer biogenesis. Its function is as follows. Involved in the assembly of a N-linked pentasaccharide that decorates the S-layer glycoprotein and flagellins. Catalyzes the addition to the dolichol phosphate carrier of the hexuronic acid found at position 4 of the pentasaccharide. The protein is Glycosyltransferase AglE (aglE) of Haloferax volcanii (strain ATCC 29605 / DSM 3757 / JCM 8879 / NBRC 14742 / NCIMB 2012 / VKM B-1768 / DS2) (Halobacterium volcanii).